The primary structure comprises 400 residues: 3-phenylpropionate/cinnamic acid dioxygenase ferredoxin--NAD(+) reductase component (400 aa).

5–36 (TIIIVGGGQAAAMAAASLRQQGFTGELHLFSD) is a binding site for FAD. An NAD(+)-binding site is contributed by 146-174 (SVVIVGAGTIGLELAASATQRRCKVTVIE).

Belongs to the bacterial ring-hydroxylating dioxygenase ferredoxin reductase family. As to quaternary structure, this dioxygenase system consists of four proteins: the two subunits of the hydroxylase component (HcaE and HcaF), a ferredoxin (HcaC) and a ferredoxin reductase (HcaD). Requires FAD as cofactor.

It carries out the reaction 2 reduced [2Fe-2S]-[ferredoxin] + NAD(+) + H(+) = 2 oxidized [2Fe-2S]-[ferredoxin] + NADH. The protein operates within aromatic compound metabolism; 3-phenylpropanoate degradation. Part of the multicomponent 3-phenylpropionate dioxygenase, that converts 3-phenylpropionic acid (PP) and cinnamic acid (CI) into 3-phenylpropionate-dihydrodiol (PP-dihydrodiol) and cinnamic acid-dihydrodiol (CI-dihydrodiol), respectively. The sequence is that of 3-phenylpropionate/cinnamic acid dioxygenase ferredoxin--NAD(+) reductase component from Escherichia coli (strain 55989 / EAEC).